A 421-amino-acid polypeptide reads, in one-letter code: Bestrophin homolog 2 (421 aa).

4 consecutive transmembrane segments (helical) span residues 28–48 (IWKAIYMETIIFLICYGIISV), 73–93 (LSFIPLEFVLGFFVTIVVDRW), 239–259 (LMYPQLVCLAVNLYFLVSIIA), and 275–295 (VYFPVMTFLQFIFYMGWLKVI).

Belongs to the anion channel-forming bestrophin (TC 1.A.46) family. Calcium-sensitive chloride channel subfamily. As to quaternary structure, forms oligomers.

The protein resides in the cell membrane. Forms chloride channels. The sequence is that of Bestrophin homolog 2 (best-2) from Caenorhabditis elegans.